Reading from the N-terminus, the 388-residue chain is Serpin B11 (388 aa).

Residues 338–362 (EEGTEAAAATGESISVKRLPVTVQF) are RCL.

Belongs to the serpin family. Ov-serpin subfamily. Expressed in eye, lung, lymphocytes, thymus, stomach, uterus, heart, brain, liver, skeletal muscle, and in day 7, 15, and 17 embryos.

The protein resides in the cytoplasm. In terms of biological role, inhibitor of serine proteases. Has moderate inhibitory activity for trypsin-like peptidases, but also some activity with cysteine peptidases, cathepsin L, K, and V, and the serine peptidase, tryptase gamma. This is Serpin B11 (Serpinb11) from Mus musculus (Mouse).